Here is a 403-residue protein sequence, read N- to C-terminus: Neuromedin U receptor homolog nmur-2 (403 aa).

At 1-27 (MSQCTVEYNVSEITEYVLSTLGERCQS) the chain is on the extracellular side. Residues 28–48 (AGIVIPTVIIYGTIFLLGLFG) traverse the membrane as a helical segment. Residues 49-68 (NICTCIVIAANKSMHNPTNY) lie on the Cytoplasmic side of the membrane. A helical membrane pass occupies residues 69 to 89 (YLFSLAVSDIIALILGLPMEF). Over 90 to 109 (YQSLDYSYPYRFSEGICKAR) the chain is Extracellular. Residues 110–130 (AFLIEFTSYASIMIICCFSFE) traverse the membrane as a helical segment. Residues 131–151 (RWLAICHPLRSKIFSTLWRAN) lie on the Cytoplasmic side of the membrane. A helical transmembrane segment spans residues 152–172 (VLIILAWTISFVCALPIAFIV). Residues 173 to 216 (QINKLPLPEDAKYQPWTNKVSTDGIFVLHTEFCAMNQSRPDQQK) lie on the Extracellular side of the membrane. A helical membrane pass occupies residues 217 to 237 (MIIIFAFTVFFVIPAIAIVIM). Residues 238 to 268 (YAHIAVQLESSEIDLKGDKMVKKRRNKSNRT) lie on the Cytoplasmic side of the membrane. The chain crosses the membrane as a helical span at residues 269–289 (VLKMLLSVVITFFICWLPFHI). Over 290-304 (QRLLSVYTTWSETTT) the chain is Extracellular. The helical transmembrane segment at 305 to 325 (ISPPVQFLSMIVFYISGFCYY) threads the bilayer. At 326-403 (SNSAANPILY…PHRKLEVHNY (78 aa)) the chain is on the cytoplasmic side.

This sequence belongs to the G-protein coupled receptor 1 family.

The protein resides in the membrane. Its function is as follows. Putative G protein-coupled receptor for pyrokinin-like neuropeptide derived from the processing of the neuropeptide precursor capa-1. The sequence is that of Neuromedin U receptor homolog nmur-2 from Caenorhabditis elegans.